Reading from the N-terminus, the 339-residue chain is Uroporphyrinogen decarboxylase (339 aa).

Substrate-binding positions include 23–27 (RQAGR), Asp72, Tyr147, Thr202, and His315.

This sequence belongs to the uroporphyrinogen decarboxylase family. As to quaternary structure, homodimer.

It is found in the cytoplasm. The enzyme catalyses uroporphyrinogen III + 4 H(+) = coproporphyrinogen III + 4 CO2. The protein operates within porphyrin-containing compound metabolism; protoporphyrin-IX biosynthesis; coproporphyrinogen-III from 5-aminolevulinate: step 4/4. Its function is as follows. Catalyzes the decarboxylation of four acetate groups of uroporphyrinogen-III to yield coproporphyrinogen-III. This chain is Uroporphyrinogen decarboxylase, found in Geobacter sp. (strain M21).